Consider the following 160-residue polypeptide: SsrA-binding protein (160 aa).

Residues 136 to 160 form a disordered region; the sequence is KRDTMRERDSNRELQRAVRNKGKED.

Belongs to the SmpB family.

It is found in the cytoplasm. Functionally, required for rescue of stalled ribosomes mediated by trans-translation. Binds to transfer-messenger RNA (tmRNA), required for stable association of tmRNA with ribosomes. tmRNA and SmpB together mimic tRNA shape, replacing the anticodon stem-loop with SmpB. tmRNA is encoded by the ssrA gene; the 2 termini fold to resemble tRNA(Ala) and it encodes a 'tag peptide', a short internal open reading frame. During trans-translation Ala-aminoacylated tmRNA acts like a tRNA, entering the A-site of stalled ribosomes, displacing the stalled mRNA. The ribosome then switches to translate the ORF on the tmRNA; the nascent peptide is terminated with the 'tag peptide' encoded by the tmRNA and targeted for degradation. The ribosome is freed to recommence translation, which seems to be the essential function of trans-translation. This is SsrA-binding protein from Pseudomonas putida (strain GB-1).